The sequence spans 296 residues: MGQFTLTPSEQEIQAFLKQYKKYLSSSKNPYIRYFFRLEQATASVYTSGKLLLQGEEADKYALFFKETADLTRPPQKITYQAMIGTDEVGNGSYFGGLAVVASFVTKEQEDFLRKLGVGDSKTLTDQKIRQLAPILKEKITHQALLLSPKKYNQVIASGYNAVSVKVALHNQAIYLLLEKGIKPDQIVIDAFTSSTNYQRYVKQERNQVSQAIHLEEKAEGKYLAVAVSSIIARDLFLENLEILSQELGYQLPSGAGAKSDQVASQILKAYGMAGLETSAKLHFKNTQKAKQLLER.

Residues Q81–R296 enclose the RNase H type-2 domain. A divalent metal cation-binding residues include D87, E88, and D190.

Belongs to the RNase HII family. RnhC subfamily. The cofactor is Mn(2+). Mg(2+) serves as cofactor.

Its subcellular location is the cytoplasm. It catalyses the reaction Endonucleolytic cleavage to 5'-phosphomonoester.. Endonuclease that specifically degrades the RNA of RNA-DNA hybrids. The protein is Ribonuclease HIII of Streptococcus gordonii (strain Challis / ATCC 35105 / BCRC 15272 / CH1 / DL1 / V288).